The following is a 291-amino-acid chain: 4-diphosphocytidyl-2-C-methyl-D-erythritol kinase (291 aa).

Lys-11 is an active-site residue. An ATP-binding site is contributed by 94-104 (PAGSGLGGGSA). Asp-136 is an active-site residue.

This sequence belongs to the GHMP kinase family. IspE subfamily.

It carries out the reaction 4-CDP-2-C-methyl-D-erythritol + ATP = 4-CDP-2-C-methyl-D-erythritol 2-phosphate + ADP + H(+). It functions in the pathway isoprenoid biosynthesis; isopentenyl diphosphate biosynthesis via DXP pathway; isopentenyl diphosphate from 1-deoxy-D-xylulose 5-phosphate: step 3/6. Catalyzes the phosphorylation of the position 2 hydroxy group of 4-diphosphocytidyl-2C-methyl-D-erythritol. In Treponema pallidum (strain Nichols), this protein is 4-diphosphocytidyl-2-C-methyl-D-erythritol kinase.